The primary structure comprises 375 residues: AA9 family lytic polysaccharide monooxygenase CEL1 (375 aa).

The signal sequence occupies residues 1–16; that stretch reads MLFPALALLCPVLVAA. His-119 lines the Cu(2+) pocket. Cys-130 and Cys-135 are joined by a disulfide. Asn-132 carries N-linked (GlcNAc...) asparagine glycosylation. His-196 contacts O2. The N-linked (GlcNAc...) asparagine glycan is linked to Asn-197. Cu(2+) is bound at residue Tyr-212. The cysteines at positions 232 and 237 are disulfide-linked. Residues 287–375 are disordered; the sequence is NGMSSSPSSS…RSRVAHLDRH (89 aa). Over residues 290–341 the composition is skewed to low complexity; that stretch reads SSSPSSSSGVSSSSSSSVASSDTSDSTTSSGVVAVNVSAASSPSSSISANSA. A glycan (N-linked (GlcNAc...) asparagine) is linked at Asn-325. The span at 347 to 369 shows a compositional bias: basic residues; the sequence is KTCKRKKRSKIAGQKRHIHRSRV.

This sequence belongs to the polysaccharide monooxygenase AA9 family. It depends on Cu(2+) as a cofactor.

It is found in the secreted. Its subcellular location is the cell wall. It carries out the reaction [(1-&gt;4)-beta-D-glucosyl]n+m + reduced acceptor + O2 = 4-dehydro-beta-D-glucosyl-[(1-&gt;4)-beta-D-glucosyl]n-1 + [(1-&gt;4)-beta-D-glucosyl]m + acceptor + H2O.. Its function is as follows. Lytic polysaccharide monooxygenase (LPMO) that depolymerizes polysaccharides via the oxidation of scissile alpha- or beta-(1-4)-glycosidic bonds, yielding C4 oxidation products. Catalysis by LPMOs requires the reduction of the active-site copper from Cu(II) to Cu(I) by a reducing agent and H(2)O(2) or O(2) as a cosubstrate. Required for the expression of stress response phenotypes, including thermotolerance, cell wall integrity, and efficient cell cycle progression. Promotes intrinsic fungal cell wall remodeling events required for efficient adaptation to the host environment. Required for virulence in a murine inhalational model of cryptococcal infection as well as in Galleria mellonella larvae. In Cryptococcus neoformans var. grubii serotype A (strain H99 / ATCC 208821 / CBS 10515 / FGSC 9487) (Filobasidiella neoformans var. grubii), this protein is AA9 family lytic polysaccharide monooxygenase CEL1.